A 210-amino-acid polypeptide reads, in one-letter code: MKVIAFARNDLGTGASRRQRIAGLTPGIVYGGTAAPVNISLDHNALYHALKKEAFHSSILDLEVDGKVEQVLLRDFQVHAYKQLVLHADFQRVDAKQKIHVKVPLHFINAEISPAVKLQAGIISHVATELDITCLPGNLPEFVEVDLATLEVGHSIHLADIKLPKGVVAVIHGGEDNPTIATAAVPAGKVEEAAAAPAAAAAPAAPADKK.

It belongs to the bacterial ribosomal protein bL25 family. CTC subfamily. As to quaternary structure, part of the 50S ribosomal subunit; part of the 5S rRNA/L5/L18/L25 subcomplex. Contacts the 5S rRNA. Binds to the 5S rRNA independently of L5 and L18.

Functionally, this is one of the proteins that binds to the 5S RNA in the ribosome where it forms part of the central protuberance. The chain is Large ribosomal subunit protein bL25 from Herminiimonas arsenicoxydans.